Consider the following 214-residue polypeptide: Potassium-transporting ATPase KdpC subunit (214 aa).

A helical transmembrane segment spans residues 17–37; sequence LWVITALIYPFSMIAIGQILF.

It belongs to the KdpC family. The system is composed of three essential subunits: KdpA, KdpB and KdpC.

The protein localises to the cell inner membrane. Its function is as follows. Part of the high-affinity ATP-driven potassium transport (or Kdp) system, which catalyzes the hydrolysis of ATP coupled with the electrogenic transport of potassium into the cytoplasm. This subunit acts as a catalytic chaperone that increases the ATP-binding affinity of the ATP-hydrolyzing subunit KdpB by the formation of a transient KdpB/KdpC/ATP ternary complex. This chain is Potassium-transporting ATPase KdpC subunit, found in Microcystis aeruginosa (strain NIES-843 / IAM M-2473).